The chain runs to 439 residues: Tol-Pal system protein TolB (439 aa).

Residues 1 to 22 (MKKPLRWLAALTVLLLPLSALA) form the signal peptide.

The protein belongs to the TolB family. As to quaternary structure, the Tol-Pal system is composed of five core proteins: the inner membrane proteins TolA, TolQ and TolR, the periplasmic protein TolB and the outer membrane protein Pal. They form a network linking the inner and outer membranes and the peptidoglycan layer.

The protein resides in the periplasm. In terms of biological role, part of the Tol-Pal system, which plays a role in outer membrane invagination during cell division and is important for maintaining outer membrane integrity. This is Tol-Pal system protein TolB from Xanthomonas oryzae pv. oryzae (strain MAFF 311018).